Consider the following 164-residue polypeptide: Protein CURVATURE THYLAKOID 1A, chloroplastic (164 aa).

The transit peptide at 1–62 (MAISVAASSS…LQKVELLKTR (62 aa)) directs the protein to the chloroplast. Ala-63 carries the N-acetylalanine modification. At 63–93 (ASSEETSSIDTNELITDLKEKWDGLENKSTV) the chain is on the stromal side. Residues 94 to 114 (LIYGGGAIVAVWLSSIVVGAI) form a helical membrane-spanning segment. The Lumenal segment spans residues 115 to 116 (NS). Residues 117–137 (VPLLPKVMELVGLGYTGWFVY) form a helical membrane-spanning segment. Topologically, residues 138 to 164 (RYLLFKSSRKELAEDIESLKKKIAGSE) are stromal. Residues 140–164 (LLFKSSRKELAEDIESLKKKIAGSE) are a coiled coil.

The protein belongs to the CURT family. Homo- and heterodimers and trimers.

The protein resides in the plastid. It is found in the chloroplast. Its subcellular location is the plastoglobule. It localises to the membrane. The protein localises to the chloroplast thylakoid membrane. In terms of biological role, determines thylakoid architecture by inducing membrane curvature. The protein is Protein CURVATURE THYLAKOID 1A, chloroplastic (CURT1A) of Arabidopsis thaliana (Mouse-ear cress).